Here is a 532-residue protein sequence, read N- to C-terminus: MFKNINAAVLLLILSTRNDYANAAAGDNENLFLDLCNLLELGKRAVSKLAPTNLGELAYSEIQKLNMSLSDDAWKAKFAPKKGKQENSNNADGAPRSQEKTHARNHAWRQAATDLAGDEGDKPTLRLAGLEAVTQVEKLQYLSALQPLAERAAAILEQLKTLHSGSAGLTDTNIRQEIQTALYGTGATAPEKTTLQLLKGKGNVGSTRKDICGQDNTAAKADTVLAYLFCICAGHATDSGGAIKVCSQTQPANNKADADVSDAHTHAAALAGQCHGSDTTNDIKAAEIDSAILEFTSKLKAANQKPYFGKYSATGCTGSDAEGICVMFKTTAKGEGKAVKQIPWVLTLHNAAEMIRKQQAVNGKIDSLNQELQAIQTAAYALKPQLEMYKRLQQTTEKARPGKQLTEMQAGECNTHKSNSTCPKNNCKWEEKDGKDGKCVADDSKVTTQGNAPAGAGDGTAGTTTTPNCASHTDKTKCEEENKGKTTPVCGWRKGKEGESDQDKEMCRNGSFLAKKKFALSVVSAAFTALLF.

Residues 1 to 23 (MFKNINAAVLLLILSTRNDYANA) form the signal peptide. Residue Asn66 is glycosylated (N-linked (GlcNAc...) asparagine). Disordered regions lie at residues 79–107 (APKKGKQENSNNADGAPRSQEKTHARNHA) and 408–504 (MQAG…DQDK). Asn419 carries N-linked (GlcNAc...) asparagine glycosylation. Residues 427-445 (CKWEEKDGKDGKCVADDSK) are compositionally biased toward basic and acidic residues. Positions 450 to 470 (GNAPAGAGDGTAGTTTTPNCA) are enriched in low complexity. 2 stretches are compositionally biased toward basic and acidic residues: residues 472–484 (HTDKTKCEEENKG) and 494–504 (KGKEGESDQDK). Asn509 carries N-linked (GlcNAc...) asparagine glycosylation. A lipid anchor (GPI-anchor amidated asparagine) is attached at Asn509. A propeptide spans 510 to 532 (GSFLAKKKFALSVVSAAFTALLF) (removed in mature form).

It localises to the cell membrane. Its function is as follows. VSG forms a coat on the surface of the parasite. The trypanosome evades the immune response of the host by expressing a series of antigenically distinct VSGs from an estimated 1000 VSG genes. The sequence is that of Variant surface glycoprotein ILTAT 1.23 from Trypanosoma brucei brucei.